The sequence spans 207 residues: Outer-membrane lipoprotein LolB (207 aa).

Residues 1–21 form the signal peptide; that stretch reads MPTNTVRCLRLLPLASVLLAA. Residue cysteine 22 is the site of N-palmitoyl cysteine attachment. Residue cysteine 22 is the site of S-diacylglycerol cysteine attachment.

Belongs to the LolB family. Monomer.

It localises to the cell outer membrane. Its function is as follows. Plays a critical role in the incorporation of lipoproteins in the outer membrane after they are released by the LolA protein. The sequence is that of Outer-membrane lipoprotein LolB from Pectobacterium carotovorum subsp. carotovorum (strain PC1).